Here is a 179-residue protein sequence, read N- to C-terminus: Large ribosomal subunit protein uL5 (179 aa).

This sequence belongs to the universal ribosomal protein uL5 family. As to quaternary structure, part of the 50S ribosomal subunit; part of the 5S rRNA/L5/L18/L25 subcomplex. Contacts the 5S rRNA and the P site tRNA. Forms a bridge to the 30S subunit in the 70S ribosome.

Its function is as follows. This is one of the proteins that bind and probably mediate the attachment of the 5S RNA into the large ribosomal subunit, where it forms part of the central protuberance. In the 70S ribosome it contacts protein S13 of the 30S subunit (bridge B1b), connecting the 2 subunits; this bridge is implicated in subunit movement. Contacts the P site tRNA; the 5S rRNA and some of its associated proteins might help stabilize positioning of ribosome-bound tRNAs. This Francisella tularensis subsp. tularensis (strain SCHU S4 / Schu 4) protein is Large ribosomal subunit protein uL5.